Here is a 167-residue protein sequence, read N- to C-terminus: MAKLEAQQKDDLQEKLIAVNRVSKVVKGGRIFSFTALTVVGDGNGKIGYGYGKAREVPAAIQKAMEKARRNMVTVELNAGTLHHPVKGRHTGSRVYMQPASQGTGIIAGGAMRAVLEVAGVHNVLSKAYGSTNPINIVRATVDALVHMKSPSQIAAKRGLNVDEIRG.

Positions 12 to 75 (LQEKLIAVNR…EKARRNMVTV (64 aa)) constitute an S5 DRBM domain.

It belongs to the universal ribosomal protein uS5 family. Part of the 30S ribosomal subunit. Contacts proteins S4 and S8.

With S4 and S12 plays an important role in translational accuracy. Functionally, located at the back of the 30S subunit body where it stabilizes the conformation of the head with respect to the body. This Shewanella sp. (strain W3-18-1) protein is Small ribosomal subunit protein uS5.